The chain runs to 111 residues: N-alpha-acetyltransferase 38-B, NatC auxiliary subunit (111 aa).

One can recognise a Sm domain in the interval 28–106 (TARHKLESLL…IVSIQVELET (79 aa)).

The protein belongs to the snRNP Sm proteins family. Component of the N-terminal acetyltransferase C (NatC) complex, which is composed of naa35, naa38 and naa30.

Its subcellular location is the cytoplasm. Functionally, auxillary component of the N-terminal acetyltransferase C (NatC) complex which catalyzes acetylation of N-terminal methionine residues. The protein is N-alpha-acetyltransferase 38-B, NatC auxiliary subunit (naa38-b) of Xenopus laevis (African clawed frog).